Here is a 343-residue protein sequence, read N- to C-terminus: Ornithine carbamoyltransferase (343 aa).

Carbamoyl phosphate contacts are provided by residues 62 to 65, Gln89, Arg113, and 140 to 143; these read STRT and HPTQ. L-ornithine contacts are provided by residues Asn172, Asp236, and 240–241; that span reads SM. Carbamoyl phosphate-binding positions include 278–279 and Arg323; that span reads CL.

This sequence belongs to the aspartate/ornithine carbamoyltransferase superfamily. OTCase family.

The protein resides in the cytoplasm. It catalyses the reaction carbamoyl phosphate + L-ornithine = L-citrulline + phosphate + H(+). Its pathway is amino-acid degradation; L-arginine degradation via ADI pathway; carbamoyl phosphate from L-arginine: step 2/2. Reversibly catalyzes the transfer of the carbamoyl group from carbamoyl phosphate (CP) to the N(epsilon) atom of ornithine (ORN) to produce L-citrulline. In Levilactobacillus brevis (strain ATCC 367 / BCRC 12310 / CIP 105137 / JCM 1170 / LMG 11437 / NCIMB 947 / NCTC 947) (Lactobacillus brevis), this protein is Ornithine carbamoyltransferase.